Here is a 245-residue protein sequence, read N- to C-terminus: 5-oxoprolinase subunit A (245 aa).

It belongs to the LamB/PxpA family. In terms of assembly, forms a complex composed of PxpA, PxpB and PxpC.

The enzyme catalyses 5-oxo-L-proline + ATP + 2 H2O = L-glutamate + ADP + phosphate + H(+). Its function is as follows. Catalyzes the cleavage of 5-oxoproline to form L-glutamate coupled to the hydrolysis of ATP to ADP and inorganic phosphate. The sequence is that of 5-oxoprolinase subunit A from Haemophilus influenzae (strain PittGG).